A 581-amino-acid polypeptide reads, in one-letter code: UvrABC system protein C (581 aa).

Residues arginine 15 to valine 94 enclose the GIY-YIG domain. The UVR domain maps to glycine 202–leucine 237.

It belongs to the UvrC family. As to quaternary structure, interacts with UvrB in an incision complex.

It localises to the cytoplasm. In terms of biological role, the UvrABC repair system catalyzes the recognition and processing of DNA lesions. UvrC both incises the 5' and 3' sides of the lesion. The N-terminal half is responsible for the 3' incision and the C-terminal half is responsible for the 5' incision. The chain is UvrABC system protein C from Haloarcula marismortui (strain ATCC 43049 / DSM 3752 / JCM 8966 / VKM B-1809) (Halobacterium marismortui).